The primary structure comprises 63 residues: DNA gyrase inhibitor YacG (63 aa).

Zn(2+)-binding residues include Cys-9, Cys-12, Cys-28, and Cys-32.

The protein belongs to the DNA gyrase inhibitor YacG family. In terms of assembly, interacts with GyrB. The cofactor is Zn(2+).

Functionally, inhibits all the catalytic activities of DNA gyrase by preventing its interaction with DNA. Acts by binding directly to the C-terminal domain of GyrB, which probably disrupts DNA binding by the gyrase. The chain is DNA gyrase inhibitor YacG from Salmonella choleraesuis (strain SC-B67).